The primary structure comprises 505 residues: Cytochrome P450 monooxygenase FGM1 (505 aa).

The first 23 residues, 1–23 (MPLILSITSSGTVLVLLTLLSLA), serve as a signal peptide directing secretion. Asn-188 and Asn-351 each carry an N-linked (GlcNAc...) asparagine glycan. A heme-binding site is contributed by Cys-450.

It belongs to the cytochrome P450 family. Heme is required as a cofactor.

It functions in the pathway secondary metabolite biosynthesis. Cytochrome P450 monooxygenase; part of the Fg3_54/C64 gene cluster that mediates the biosynthesis of the octapeptide fusaoctaxin A, a virulence factor that is required for cell-to-cell invasiveness of plant host. The 2 nonribosomal peptide synthetases NRPS9 and NRPS5 form an assembly line which likely utilizes GABA as a starter unit (loaded on the unique module M1 of NRPS9) and sequentially incorporates seven extender units composed of the residues L-Ala, L-allo-Ile, L-Ser, L-Val, L-Ser, L-Leu and L-Leu, respectively. During the process, each of the residues that are tethered on modules M3-M7 of NRPS5 containing an E domain can undergo an epimerization reaction to produce a D-configuration before the transpeptidation reaction occurs. The elongation of the peptidyl chain might be terminated by module M8-mediated L-Leu incorporation, followed by R domain-catalyzed 4 electron reduction to release the resulting octapeptide from the assembly line as an alcohol. Fusaoctaxin A is cleaved by the cluster specific ABC transporter FGM5 to the pentapeptide fusapentaxin A and the tripeptide fusatrixin A. The other enzymes from the cluster, FGM1, FGM2, FGM3 and FGM9 seem not to be involved in the biosynthesis of fusaoctaxin A and their functions have still to be determined. The protein is Cytochrome P450 monooxygenase FGM1 of Gibberella zeae (strain ATCC MYA-4620 / CBS 123657 / FGSC 9075 / NRRL 31084 / PH-1) (Wheat head blight fungus).